A 306-amino-acid polypeptide reads, in one-letter code: uncharacterized protein (306 aa).

Transmembrane regions (helical) follow at residues leucine 6–leucine 26, alanine 35–alanine 55, tyrosine 69–serine 89, valine 98–phenylalanine 118, leucine 122–asparagine 142, tyrosine 154–alanine 174, glutamine 186–serine 206, leucine 211–glycine 231, valine 247–serine 267, and tyrosine 281–leucine 301. 2 consecutive EamA domains span residues methionine 17 to asparagine 142 and leucine 166 to isoleucine 296.

The protein belongs to the EamA transporter family.

It is found in the cell membrane. This is an uncharacterized protein from Haemophilus influenzae (strain ATCC 51907 / DSM 11121 / KW20 / Rd).